We begin with the raw amino-acid sequence, 234 residues long: Sugar fermentation stimulation protein A (234 aa).

The H-T-H motif DNA-binding region spans 201–220; it reads LLSEAQQRGVEILAYKAELS.

It belongs to the SfsA family.

Functionally, binds to DNA non-specifically. Could be a regulatory factor involved in maltose metabolism. In Escherichia coli O127:H6 (strain E2348/69 / EPEC), this protein is Sugar fermentation stimulation protein A.